The primary structure comprises 257 residues: Type III pantothenate kinase (257 aa).

6 to 13 is a binding site for ATP; it reads DVGNTNTV. Substrate-binding positions include Tyr-102 and 109–112; that span reads GADR. Asp-111 functions as the Proton acceptor in the catalytic mechanism. Residue Asp-131 coordinates K(+). An ATP-binding site is contributed by Thr-134. Thr-186 is a binding site for substrate.

This sequence belongs to the type III pantothenate kinase family. Homodimer. The cofactor is NH4(+). K(+) serves as cofactor.

Its subcellular location is the cytoplasm. It carries out the reaction (R)-pantothenate + ATP = (R)-4'-phosphopantothenate + ADP + H(+). The protein operates within cofactor biosynthesis; coenzyme A biosynthesis; CoA from (R)-pantothenate: step 1/5. In terms of biological role, catalyzes the phosphorylation of pantothenate (Pan), the first step in CoA biosynthesis. In Leptospira interrogans serogroup Icterohaemorrhagiae serovar copenhageni (strain Fiocruz L1-130), this protein is Type III pantothenate kinase.